Consider the following 194-residue polypeptide: Peptidyl-tRNA hydrolase (194 aa).

Tyr-16 provides a ligand contact to tRNA. His-21 serves as the catalytic Proton acceptor. Positions 66, 68, and 114 each coordinate tRNA.

The protein belongs to the PTH family. Monomer.

It is found in the cytoplasm. It carries out the reaction an N-acyl-L-alpha-aminoacyl-tRNA + H2O = an N-acyl-L-amino acid + a tRNA + H(+). Its function is as follows. Hydrolyzes ribosome-free peptidyl-tRNAs (with 1 or more amino acids incorporated), which drop off the ribosome during protein synthesis, or as a result of ribosome stalling. Catalyzes the release of premature peptidyl moieties from peptidyl-tRNA molecules trapped in stalled 50S ribosomal subunits, and thus maintains levels of free tRNAs and 50S ribosomes. The polypeptide is Peptidyl-tRNA hydrolase (Geobacter metallireducens (strain ATCC 53774 / DSM 7210 / GS-15)).